The following is a 226-amino-acid chain: Ribose-5-phosphate isomerase A (226 aa).

Substrate is bound by residues 33–36 (TGST), 86–89 (DGAD), and 99–102 (KGGG). Glu108 (proton acceptor) is an active-site residue. Residue Lys126 participates in substrate binding.

Belongs to the ribose 5-phosphate isomerase family. Homodimer.

The catalysed reaction is aldehydo-D-ribose 5-phosphate = D-ribulose 5-phosphate. It functions in the pathway carbohydrate degradation; pentose phosphate pathway; D-ribose 5-phosphate from D-ribulose 5-phosphate (non-oxidative stage): step 1/1. Functionally, catalyzes the reversible conversion of ribose-5-phosphate to ribulose 5-phosphate. The sequence is that of Ribose-5-phosphate isomerase A from Bordetella parapertussis (strain 12822 / ATCC BAA-587 / NCTC 13253).